We begin with the raw amino-acid sequence, 217 residues long: Probable GTP-binding protein EngB (217 aa).

An EngB-type G domain is found at 37–214 (DGVEIAFAGR…RAAMAKLLEE (178 aa)). GTP contacts are provided by residues 45–52 (GRSNVGKS), 72–76 (GRTQE), 92–95 (DMPG), 159–162 (TKAD), and 193–195 (TSS). Positions 52 and 74 each coordinate Mg(2+).

The protein belongs to the TRAFAC class TrmE-Era-EngA-EngB-Septin-like GTPase superfamily. EngB GTPase family. Mg(2+) serves as cofactor.

Its function is as follows. Necessary for normal cell division and for the maintenance of normal septation. The polypeptide is Probable GTP-binding protein EngB (Bradyrhizobium diazoefficiens (strain JCM 10833 / BCRC 13528 / IAM 13628 / NBRC 14792 / USDA 110)).